The primary structure comprises 304 residues: Aquaglyceroporin-3 (304 aa).

Residues 1–68 (MQSQPDNVAY…LRLNYRDYMG (68 aa)) lie on the Cytoplasmic side of the membrane. The chain crosses the membrane as a helical span at residues 69–89 (ELLGTFVLLFMGNGVVATVII). Residues 90-95 (DGKLGF) lie on the Extracellular side of the membrane. Residues 96-116 (LSITLGWGIAVTMALYVSLGI) traverse the membrane as a helical segment. The Cytoplasmic portion of the chain corresponds to 117–142 (SSGHLNPAVTVGNAVFGDFPWRKVPG). A helical membrane pass occupies residues 143–163 (YIAAQMLGAFLGAACAYGVFA). At 164 to 196 (DLLKAHGGGELIAFGEKGTAGVFSTYPRDSNGL) the chain is on the extracellular side. Residues 197 to 217 (FSCIFGEFICTAMLLFCVCGI) form a helical membrane-spanning segment. Residues 218–231 (FDPNNSPAKGHEPL) lie on the Cytoplasmic side of the membrane. A helical membrane pass occupies residues 232 to 252 (AVGALVFAIGNNIGYSTGYAI). Over 253–277 (NPARDFGPRVFSSFLYGGEVFSHAN) the chain is Extracellular. Residues 278–298 (YYFWVPLVIPLFGGIFGLFLY) form a helical membrane-spanning segment. The Cytoplasmic portion of the chain corresponds to 299–304 (KYFVPH).

This sequence belongs to the MIP/aquaporin (TC 1.A.8) family.

Its subcellular location is the cell membrane. It carries out the reaction glycerol(in) = glycerol(out). The enzyme catalyses H2O(in) = H2O(out). The catalysed reaction is urea(in) = urea(out). Its function is as follows. Mediates water and glycerol transport across the cell membrane. Permeable to urea. Permeable to methylamine/methylammonium. Permeable to dihydroxyacetone. Permeable to erythritol and ribitol. This is Aquaglyceroporin-3 from Trypanosoma brucei brucei.